Reading from the N-terminus, the 750-residue chain is Neprilysin (750 aa).

Residues 1-14 are compositionally biased toward polar residues; it reads MGRSESQMDITDIN. Residues 1-20 are disordered; sequence MGRSESQMDITDINTPKPKK. Residue Gly2 is the site of N-myristoyl glycine attachment. Residues 2 to 28 are Cytoplasmic-facing; sequence GRSESQMDITDINTPKPKKKQRWTPLE. Phosphoserine is present on residues Ser4 and Ser6. The Stop-transfer sequence signature appears at 16 to 23; it reads PKPKKKQR. A helical; Signal-anchor for type II membrane protein membrane pass occupies residues 29 to 51; it reads ISLSVLVLLLTVIAVTMIALYAT. The Extracellular portion of the chain corresponds to 52–750; it reads YDDGICKSSD…MNPEKKCRVW (699 aa). The region spanning 56–750 is the Peptidase M13 domain; that stretch reads ICKSSDCIKS…MNPEKKCRVW (695 aa). Intrachain disulfides connect Cys57/Cys62, Cys80/Cys735, Cys88/Cys695, Cys143/Cys411, Cys234/Cys242, and Cys621/Cys747. A peptide is bound at residue Arg103. N-linked (GlcNAc...) asparagine glycosylation occurs at Asn145. N-linked (GlcNAc...) asparagine glycans are attached at residues Asn285, Asn311, and Asn325. His584 lines the Zn(2+) pocket. Glu585 is a catalytic residue. A Zn(2+)-binding site is contributed by His588. Residue Asn628 is glycosylated (N-linked (GlcNAc...) asparagine). Glu647 provides a ligand contact to Zn(2+). Catalysis depends on Asp651, which acts as the Proton donor.

Belongs to the peptidase M13 family. It depends on Zn(2+) as a cofactor. Post-translationally, myristoylation is a determinant of membrane targeting. In terms of processing, glycosylation at Asn-628 is necessary both for surface expression and neutral endopeptidase activity.

It localises to the cell membrane. The catalysed reaction is Preferential cleavage of polypeptides between hydrophobic residues, particularly with Phe or Tyr at P1'.. It catalyses the reaction substance P + H2O = substance P(1-9) + L-Leu-L-Met-NH2. The enzyme catalyses substance P + H2O = substance P(1-7) + L-Phe-Gly-L-Leu-L-Met-NH2. It carries out the reaction neurotensin + H2O = neurotensin(1-11) + L-isoleucyl-L-leucine. The catalysed reaction is neurotensin + H2O = neurotensin(1-10) + L-tyrosyl-L-isoleucyl-L-leucine. Inhibited by mixanpril, an orally-active drug used for the treatment of hypertension. In terms of biological role, thermolysin-like specificity, but is almost confined on acting on polypeptides of up to 30 amino acids. Biologically important in the destruction of opioid peptides such as Met- and Leu-enkephalins by cleavage of a Gly-Phe bond. Catalyzes cleavage of bradykinin, substance P and neurotensin peptides. Able to cleave angiotensin-1, angiotensin-2 and angiotensin 1-9. Involved in the degradation of atrial natriuretic factor (ANF) and brain natriuretic factor (BNP(1-32)). Displays UV-inducible elastase activity toward skin preelastic and elastic fibers. The protein is Neprilysin (MME) of Oryctolagus cuniculus (Rabbit).